The primary structure comprises 579 residues: Extracellular serine/threonine protein kinase FAM20C (579 aa).

At 1–10 (MKMILVRRFR) the chain is on the cytoplasmic side. A propeptide spanning residues 1 to 87 (MKMILVRRFR…PNKHTLRILQ (87 aa)) is cleaved from the precursor. A helical; Signal-anchor for type II membrane protein transmembrane segment spans residues 11 to 31 (VLILVVFLLACALHIAVDLLP). The Lumenal portion of the chain corresponds to 32–579 (KLDRRATRSS…ATEHRASTER (548 aa)). The interval 38–79 (TRSSGEPGCSCAQPAAEAAGPGWAQARSRPGESAGGDAGWPN) is disordered. Positions 49-63 (AQPAAEAAGPGWAQA) are enriched in low complexity. N-linked (GlcNAc...) asparagine glycosylation occurs at N96. Positions 104-155 (KLPSAAEPVDHAPRGQEPRSPPPRDPAHRPLLRDPGPRPRVPPPGPSGDGSL) are disordered. Basic and acidic residues-rich tracts occupy residues 111–120 (PVDHAPRGQE) and 128–140 (DPAH…DPGP). Q264, K280, and E301 together coordinate ATP. Position 301 (E301) interacts with Mn(2+). A kinase domain region spans residues 349–560 (FVSPANNICF…AVRDCVEKDG (212 aa)). Intrachain disulfides connect C357/C373 and C362/C366. ATP is bound at residue 384 to 387 (AAFL). Cystine bridges form between C421-C495 and C496-C555. D453 is an active-site residue. ATP contacts are provided by E458 and D473. Position 473 (D473) interacts with Mn(2+).

It belongs to the FAM20 family. As to quaternary structure, homodimer; disulfide-linked. Interacts with FAM20A; probably forming a heterotetramer of 2 subunits of FAM20A and 2 subunits of FAM20C. Interacts with COPII components SEC23A and SEC24A; transport of FAM20C from the endoplasmic reticulum to the Golgi is likely to be mediated by COPII vesicles. Requires Mn(2+) as cofactor. In terms of processing, N-glycosylation is required for folding. Post-translationally, autophosphorylated. Propeptide cleavage by MBTPS1/S1P promotes FAM20C secretion and maximal kinase activity which is essential for efficient osteoblast differentiation and biomineralization. As to expression, in the mammary gland, expressed at higher levels in lactating mice than in virgin mice (at protein level). Highly expressed in the tooth. No expression in the dental pulp. At the secretory stage of amelogenesis, it is detected in the matrix of the enamel, in the ameloblasts, and within the cells adjoining the stratum intermedium (a tissue layer analogous to the stellate reticulum seen in the developing molar). Strong expression is observed in maturation stage ameloblasts and throughout the non-cornified layers of the gingival epithelium. Expressed at moderate levels in bone and at low levels in kidney, liver, brain and lung. Very low expression, if any, in spleen and skeletal muscle.

It is found in the golgi apparatus membrane. Its subcellular location is the secreted. The protein resides in the endoplasmic reticulum. The enzyme catalyses L-seryl-[protein] + ATP = O-phospho-L-seryl-[protein] + ADP + H(+). The catalysed reaction is L-threonyl-[protein] + ATP = O-phospho-L-threonyl-[protein] + ADP + H(+). Its activity is regulated as follows. Serine/threonine protein kinase activity is increased upon interaction with FAM20A. Golgi serine/threonine protein kinase that phosphorylates secretory pathway proteins within Ser-x-Glu/pSer motifs and plays a key role in biomineralization of bones and teeth. Constitutes the main protein kinase for extracellular proteins, generating the majority of the extracellular phosphoproteome. Mainly phosphorylates proteins within the Ser-x-Glu/pSer motif, but also displays a broader substrate specificity. Phosphorylates ERO1A, enhancing its activity which is required to maintain endoplasmic reticulum redox homeostasis and for oxidative protein folding. During endoplasmic reticulum stress, phosphorylates P4HB/PDIA1 which induces a functional switch, causing P4HB to change from an oxidoreductase to a molecular chaperone. This is critical to maintain ER proteostasis and reduce cell death under ER stress. Phosphorylation of P4HB also promotes its interaction with ERN1, leading to reduced activity of ERN1, a key sensor for the endoplasmic reticulum unfolded protein response. Required for osteoblast differentiation and mineralization. Phosphorylates casein as well as a number of proteins involved in biomineralization such as AMELX, AMTN, ENAM and SPP1. In addition to its role in biomineralization, also plays a role in lipid homeostasis, wound healing and cell migration and adhesion. In Mus musculus (Mouse), this protein is Extracellular serine/threonine protein kinase FAM20C.